A 256-amino-acid chain; its full sequence is Hemin import ATP-binding protein HmuV (256 aa).

The 237-residue stretch at 2–238 (ISAQNLVYSL…QELTMLYGAD (237 aa)) folds into the ABC transporter domain. 34 to 41 (GPNGAGKS) serves as a coordination point for ATP.

It belongs to the ABC transporter superfamily. Heme (hemin) importer (TC 3.A.1.14.5) family. As to quaternary structure, the complex is composed of two ATP-binding proteins (HmuV), two transmembrane proteins (HmuU) and a solute-binding protein (HmuT).

It is found in the cell inner membrane. Its function is as follows. Part of the ABC transporter complex HmuTUV involved in hemin import. Responsible for energy coupling to the transport system. The sequence is that of Hemin import ATP-binding protein HmuV from Shigella dysenteriae.